The sequence spans 68 residues: Large ribosomal subunit protein uL29 (68 aa).

The protein belongs to the universal ribosomal protein uL29 family.

The protein is Large ribosomal subunit protein uL29 of Streptococcus gordonii (strain Challis / ATCC 35105 / BCRC 15272 / CH1 / DL1 / V288).